We begin with the raw amino-acid sequence, 564 residues long: Threonine--tRNA ligase (564 aa).

The segment at 167–464 (DHRSLGKQLE…LLEKTSGNFP (298 aa)) is catalytic. Residues Cys260, His311, and His441 each contribute to the Zn(2+) site.

Belongs to the class-II aminoacyl-tRNA synthetase family. In terms of assembly, homodimer. Zn(2+) is required as a cofactor.

Its subcellular location is the cytoplasm. It carries out the reaction tRNA(Thr) + L-threonine + ATP = L-threonyl-tRNA(Thr) + AMP + diphosphate + H(+). Catalyzes the attachment of threonine to tRNA(Thr) in a two-step reaction: L-threonine is first activated by ATP to form Thr-AMP and then transferred to the acceptor end of tRNA(Thr). Also edits incorrectly charged L-seryl-tRNA(Thr). This is Threonine--tRNA ligase from Mycoplasma genitalium (strain ATCC 33530 / DSM 19775 / NCTC 10195 / G37) (Mycoplasmoides genitalium).